The chain runs to 191 residues: Neuronal calcium sensor 1 (191 aa).

Gly2 carries N-myristoyl glycine lipidation. EF-hand domains follow at residues 24–59 (ESEI…FPFG), 60–95 (DPSK…TSRG), 96–131 (TVEE…IYRM), and 144–179 (TPEK…DPTI). 14 residues coordinate Ca(2+): Asp73, Asn75, Asp77, Glu84, Asp109, Asp111, Asp113, Tyr115, Glu120, Asp157, Asn159, Asp161, Gln163, and Glu168.

This sequence belongs to the recoverin family.

The protein localises to the perikaryon. The protein resides in the cell projection. Its subcellular location is the growth cone. In terms of biological role, neuronal calcium sensor, regulator of G protein-coupled receptor phosphorylation in a calcium dependent manner. Regulates neurite extension and branching by activity-dependent Ca(2+) influx in growth cones. In Lymnaea stagnalis (Great pond snail), this protein is Neuronal calcium sensor 1.